Consider the following 570-residue polypeptide: Sulfite reductase [NADPH] hemoprotein beta-component (570 aa).

The [4Fe-4S] cluster site is built by cysteine 434, cysteine 440, cysteine 479, and cysteine 483. Position 483 (cysteine 483) interacts with siroheme.

Belongs to the nitrite and sulfite reductase 4Fe-4S domain family. As to quaternary structure, alpha(8)-beta(8). The alpha component is a flavoprotein, the beta component is a hemoprotein. The cofactor is siroheme. Requires [4Fe-4S] cluster as cofactor.

The enzyme catalyses hydrogen sulfide + 3 NADP(+) + 3 H2O = sulfite + 3 NADPH + 4 H(+). It functions in the pathway sulfur metabolism; hydrogen sulfide biosynthesis; hydrogen sulfide from sulfite (NADPH route): step 1/1. Its function is as follows. Component of the sulfite reductase complex that catalyzes the 6-electron reduction of sulfite to sulfide. This is one of several activities required for the biosynthesis of L-cysteine from sulfate. This is Sulfite reductase [NADPH] hemoprotein beta-component from Shigella flexneri serotype 5b (strain 8401).